The sequence spans 96 residues: Basic blue protein (96 aa).

A Phytocyanin domain is found at 1 to 96; it reads AVYVVGGSGG…SGMKIAVNAL (96 aa). Cu cation contacts are provided by histidine 39, cysteine 79, histidine 84, and methionine 89. Cysteine 52 and cysteine 85 form a disulfide bridge.

The polypeptide is Basic blue protein (Cucumis sativus (Cucumber)).